A 410-amino-acid polypeptide reads, in one-letter code: Peptidase T (410 aa).

His-79 lines the Zn(2+) pocket. Residue Asp-81 is part of the active site. A Zn(2+)-binding site is contributed by Asp-142. The active-site Proton acceptor is Glu-176. The Zn(2+) site is built by Glu-177, Asp-199, and His-381.

Belongs to the peptidase M20B family. The cofactor is Zn(2+).

The protein resides in the cytoplasm. The catalysed reaction is Release of the N-terminal residue from a tripeptide.. In terms of biological role, cleaves the N-terminal amino acid of tripeptides. The protein is Peptidase T of Listeria monocytogenes serotype 4b (strain CLIP80459).